Consider the following 235-residue polypeptide: Large ribosomal subunit protein uL1 (235 aa).

Belongs to the universal ribosomal protein uL1 family. Part of the 50S ribosomal subunit.

Functionally, binds directly to 23S rRNA. The L1 stalk is quite mobile in the ribosome, and is involved in E site tRNA release. Protein L1 is also a translational repressor protein, it controls the translation of the L11 operon by binding to its mRNA. The sequence is that of Large ribosomal subunit protein uL1 from Synechococcus sp. (strain CC9311).